Here is a 446-residue protein sequence, read N- to C-terminus: Argininosuccinate synthase (446 aa).

ATP contacts are provided by residues Ala-17–Ser-25 and Ala-43. L-citrulline is bound at residue Tyr-99. Residues Gly-129 and Thr-131 each coordinate ATP. Residues Thr-131, Asn-135, and Asp-136 each coordinate L-aspartate. Asn-135 lines the L-citrulline pocket. Asp-136 is an ATP binding site. L-citrulline-binding residues include Arg-139 and Ser-192. Asp-194 serves as a coordination point for ATP. The L-citrulline site is built by Thr-201, Glu-203, and Glu-280.

Belongs to the argininosuccinate synthase family. Type 2 subfamily. In terms of assembly, homotetramer.

The protein resides in the cytoplasm. It catalyses the reaction L-citrulline + L-aspartate + ATP = 2-(N(omega)-L-arginino)succinate + AMP + diphosphate + H(+). The protein operates within amino-acid biosynthesis; L-arginine biosynthesis; L-arginine from L-ornithine and carbamoyl phosphate: step 2/3. The chain is Argininosuccinate synthase from Methylibium petroleiphilum (strain ATCC BAA-1232 / LMG 22953 / PM1).